The primary structure comprises 146 residues: Large-conductance mechanosensitive channel (146 aa).

Helical transmembrane passes span 21–41, 44–64, and 83–103; these read VGII…ADLI, IIGL…LGDG, and GSFI…FLLV.

The protein belongs to the MscL family. Homopentamer.

It localises to the cell inner membrane. Channel that opens in response to stretch forces in the membrane lipid bilayer. May participate in the regulation of osmotic pressure changes within the cell. This Cereibacter sphaeroides (strain ATCC 17023 / DSM 158 / JCM 6121 / CCUG 31486 / LMG 2827 / NBRC 12203 / NCIMB 8253 / ATH 2.4.1.) (Rhodobacter sphaeroides) protein is Large-conductance mechanosensitive channel.